A 296-amino-acid chain; its full sequence is NADH-cytochrome b5 reductase 1 (296 aa).

A helical membrane pass occupies residues 11–31 (LSAVLVKFAPFAVAVIAILAA). An FAD-binding FR-type domain is found at 47–152 (SEFQNFVLKE…RGPKGAMVYT (106 aa)). Residues 132–147 (TTLKIGDTLKVRGPKG) and 158–195 (HIGMIAGGTGITPMLQIIKAIIRNRPRNGGNDTTKIDL) contribute to the FAD site.

It belongs to the flavoprotein pyridine nucleotide cytochrome reductase family. In terms of assembly, monomer. Component of the 2-(3-amino-3-carboxypropyl)histidine synthase complex composed of dph1, dph2, dph3 and a NADH-dependent reductase, predominantly cbr1. It depends on FAD as a cofactor.

The protein localises to the mitochondrion outer membrane. The enzyme catalyses 2 Fe(III)-[cytochrome b5] + NADH = 2 Fe(II)-[cytochrome b5] + NAD(+) + H(+). It carries out the reaction 2 Fe(3+)-[Dph3] + NADH = 2 Fe(2+)-[Dph3] + NAD(+) + H(+). The protein operates within protein modification; peptidyl-diphthamide biosynthesis. Its function is as follows. NADH-dependent reductase for dph3 and cytochrome b5. Required for the first step of diphthamide biosynthesis, a post-translational modification of histidine which occurs in elongation factor 2. Dph1 and dph2 transfer a 3-amino-3-carboxypropyl (ACP) group from S-adenosyl-L-methionine (SAM) to a histidine residue, the reaction is assisted by a reduction system comprising dph3 and a NADH-dependent reductase, predominantly cbr1. By reducing dph3, also involved in the formation of the tRNA wobble base modification mcm5s 2U (5-methoxycarbonylmethyl-2-thiouridine), mediated by the elongator complex. The cytochrome b5/NADH cytochrome b5 reductase electron transfer system supports the catalytic activity of several sterol biosynthetic enzymes. This Aspergillus terreus (strain NIH 2624 / FGSC A1156) protein is NADH-cytochrome b5 reductase 1 (cbr1).